The chain runs to 202 residues: Protein phosphatase inhibitor 2 family member C (202 aa).

2 disordered regions span residues 1–51 (MSAS…DESS) and 71–118 (PGTS…EQES). The tract at residues 12-17 (KGILKN) is required for binding PPP1CC. A compositionally biased stretch (low complexity) spans 19 to 35 (SSSGSSVATSGQQSGGT). The required for binding PPP1CC stretch occupies residues 43-55 (KSQKWDESSILAA). The span at 71-80 (PGTSYMSVQD) shows a compositional bias: polar residues. Basic and acidic residues predominate over residues 84-112 (DSVRDVEGEDSVRGVEGKEATDASDHSCE). The tract at residues 144-147 (HYNE) is required for binding PPP1CC catalytic center, displacing metal ions and inhibition of PPP1CC catalytic activity. Residues 162 to 202 (LQSEDNENEETPQGTNEEKTAAEESEEAPLTGGLQTQSCDP) form a disordered region.

This sequence belongs to the protein phosphatase inhibitor 2 family. In terms of tissue distribution, detected in sperm (at protein level).

Functionally, functions as a protein phosphatase inhibitor. It inhibits activity of the catalytic subunit of PP1 and weakly inhibits the activity of myosin-associated phosphates. This is Protein phosphatase inhibitor 2 family member C from Homo sapiens (Human).